Reading from the N-terminus, the 790-residue chain is Disintegrin and metalloproteinase domain-containing protein 30 (790 aa).

Positions 1–27 (MRSVQIFLSQCRLLLLLVPTMLLKSLG) are cleaved as a signal peptide. Positions 28-198 (EDVIFHPEGE…KARLRDFPGS (171 aa)) are excised as a propeptide. The short motif at 170–177 (QVCGLSDD) is the Cysteine switch element. Zn(2+) is bound at residue Cys172. At 199-687 (YKHPKYLELI…LRGAIPSSIW (489 aa)) the chain is on the extracellular side. Residues 203–393 (KYLELILLFD…SGATCLNNIP (191 aa)) enclose the Peptidase M12B domain. Asn222 is a glycosylation site (N-linked (GlcNAc...) asparagine). 3 cysteine pairs are disulfide-bonded: Cys313–Cys388, Cys353–Cys373, and Cys355–Cys361. His338 contacts Zn(2+). Glu339 is a catalytic residue. Zn(2+) contacts are provided by His342 and His348. N-linked (GlcNAc...) asparagine glycosylation is found at Asn372, Asn438, Asn473, and Asn625. The 87-residue stretch at 399–485 (LKRCGNKIVE…SCPNDVYKQD (87 aa)) folds into the Disintegrin domain. Cys457 and Cys477 are disulfide-bonded. In terms of domain architecture, EGF-like spans 629–663 (LQFDCLPEKCNTRGVCNNRKNCHCMYGWAPPFCEE). 3 disulfides stabilise this stretch: Cys633–Cys644, Cys638–Cys650, and Cys652–Cys661. A helical transmembrane segment spans residues 688–708 (VVSIIMFRLILLILSVVFVFF). Topologically, residues 709–790 (RQVIGNHLKP…KAKSVKKQKK (82 aa)) are cytoplasmic. Basic and acidic residues predominate over residues 720-779 (QEKMPLSKAKTEQEESKTKTVQEESKTKTGQEESEAKTGQEESKAKTGQEESKANIESKR). The segment at 720-790 (QEKMPLSKAK…KAKSVKKQKK (71 aa)) is disordered. Repeat copies occupy residues 732 to 740 (QEESKTKTV), 741 to 749 (QEESKTKTG), 750 to 758 (QEESEAKTG), 759 to 767 (QEESKAKTG), and 768 to 776 (QEESKANIE). The tract at residues 732-776 (QEESKTKTVQEESKTKTGQEESEAKTGQEESKAKTGQEESKANIE) is 5 X 9 AA approximate repeats. Over residues 780-790 (PKAKSVKKQKK) the composition is skewed to basic residues.

As to quaternary structure, interacts with CTSD; this leads to activation of CTSD. Zn(2+) serves as cofactor. Expressed in brain neurons (at protein level). Expressed in testis.

The protein localises to the late endosome membrane. Its function is as follows. Plays a role in lysosomal amyloid precursor protein (APP) processing by cleaving and activating CTSD/cathepsin D which leads to APP degradation. This Homo sapiens (Human) protein is Disintegrin and metalloproteinase domain-containing protein 30 (ADAM30).